A 236-amino-acid chain; its full sequence is Transcription repressor MYB6 (236 aa).

2 HTH myb-type domains span residues 9–61 and 62–116; these read KAHT…INYL and RPDL…KRKL. DNA-binding regions (H-T-H motif) lie at residues 37–61 and 89–112; these read WRSLPKSAGLLRCGKSCRLRWINYL and WSLIAGRLPGRTDNEIKNYWNTHI. Positions 159 to 181 are disordered; the sequence is PKTENSSDNGASTSGTTTDEDLR. The segment covering 162 to 175 has biased composition (polar residues); the sequence is ENSSDNGASTSGTT.

Interacts with BHLH012/MYC1 and BHLH042/TT8. As to expression, expressed in roots, stems, flower buds, and siliques.

The protein localises to the nucleus. The polypeptide is Transcription repressor MYB6 (MYB6) (Arabidopsis thaliana (Mouse-ear cress)).